A 200-amino-acid chain; its full sequence is GTP cyclohydrolase-2 (200 aa).

50–54 (RVHSE) is a binding site for GTP. The Zn(2+) site is built by Cys55, Cys66, and Cys68. Residues Gln71, 93–95 (EGR), and Thr115 each bind GTP. Asp127 serves as the catalytic Proton acceptor. Residue Arg129 is the Nucleophile of the active site. The GTP site is built by Thr150 and Lys155.

This sequence belongs to the GTP cyclohydrolase II family. Zn(2+) serves as cofactor.

It catalyses the reaction GTP + 4 H2O = 2,5-diamino-6-hydroxy-4-(5-phosphoribosylamino)-pyrimidine + formate + 2 phosphate + 3 H(+). It functions in the pathway cofactor biosynthesis; riboflavin biosynthesis; 5-amino-6-(D-ribitylamino)uracil from GTP: step 1/4. Functionally, catalyzes the conversion of GTP to 2,5-diamino-6-ribosylamino-4(3H)-pyrimidinone 5'-phosphate (DARP), formate and pyrophosphate. The sequence is that of GTP cyclohydrolase-2 from Acinetobacter baumannii (strain AB0057).